The chain runs to 431 residues: Transmembrane protease serine 11C (431 aa).

Topologically, residues 1 to 33 are cytoplasmic; that stretch reads MARGQPRRSEEQWTALQNRTECKTKIKLTRCGK. A helical; Signal-anchor for type II membrane protein membrane pass occupies residues 34–54; it reads ITLGILTAVLAAVLIGLIAYF. The Extracellular portion of the chain corresponds to 55–431; the sequence is AACGKDSFYY…RDWITSKTGL (377 aa). The 118-residue stretch at 60-177 folds into the SEA domain; the sequence is DSFYYHVSFK…SSFKFSDIAM (118 aa). N99 is a glycosylation site (N-linked (GlcNAc...) asparagine). The region spanning 200–430 is the Peptidase S1 domain; the sequence is VAGGQDAEEG…YRDWITSKTG (231 aa). A disulfide bond links C225 and C241. H240 functions as the Charge relay system in the catalytic mechanism. N276 carries N-linked (GlcNAc...) asparagine glycosylation. D285 serves as the catalytic Charge relay system. N347 is a glycosylation site (N-linked (GlcNAc...) asparagine). Cystine bridges form between C350–C366 and C377–C406. Catalysis depends on S381, which acts as the Charge relay system.

Belongs to the peptidase S1 family. Proteolytically cleaved via an autocatalytic mechanism. Expressed specifically in Purkinje neurons of the cerebellum (at protein level). Also detected in spinal cord.

Its subcellular location is the cell membrane. It localises to the cell projection. The protein localises to the dendrite. It is found in the perikaryon. Functionally, serine protease which has a preference for Arg or Lys in position P1 and uncharged residues in positions P2 and P3. Shows specificity towards FGF2 in vitro. This Mus musculus (Mouse) protein is Transmembrane protease serine 11C.